A 390-amino-acid chain; its full sequence is Chorismate synthase (390 aa).

NADP(+) is bound by residues R48 and R54. FMN is bound by residues 132–134, 244–245, G289, 304–308, and R330; these read RSS, NA, and KPTSS. The segment at 362–390 is disordered; sequence VGAHPAGAHPAGADPAGTHPGGPGGFQPG. The span at 363-379 shows a compositional bias: low complexity; the sequence is GAHPAGAHPAGADPAGT. A compositionally biased stretch (gly residues) spans 380–390; the sequence is HPGGPGGFQPG.

The protein belongs to the chorismate synthase family. Homotetramer. It depends on FMNH2 as a cofactor.

The catalysed reaction is 5-O-(1-carboxyvinyl)-3-phosphoshikimate = chorismate + phosphate. The protein operates within metabolic intermediate biosynthesis; chorismate biosynthesis; chorismate from D-erythrose 4-phosphate and phosphoenolpyruvate: step 7/7. Catalyzes the anti-1,4-elimination of the C-3 phosphate and the C-6 proR hydrogen from 5-enolpyruvylshikimate-3-phosphate (EPSP) to yield chorismate, which is the branch point compound that serves as the starting substrate for the three terminal pathways of aromatic amino acid biosynthesis. This reaction introduces a second double bond into the aromatic ring system. The polypeptide is Chorismate synthase (Methylobacterium sp. (strain 4-46)).